The sequence spans 63 residues: Overexpressed in colon carcinoma 1 protein homolog (63 aa).

Residues 1 to 10 (MGCGNSTATS) are compositionally biased toward polar residues. Positions 1-39 (MGCGNSTATSAAAGRGPTGAVKDTTEDSITEDDKRRNYG) are disordered.

This sequence belongs to the OCC1 family.

This is Overexpressed in colon carcinoma 1 protein homolog from Mus musculus (Mouse).